Reading from the N-terminus, the 403-residue chain is Aurora kinase A (403 aa).

The interval 1–125 is disordered; that stretch reads MDRSKENCIS…SKQKNEESKK (125 aa). Polar residues-rich tracts occupy residues 27–83 and 91–101; these read VTQQ…QATS and PLNNTQKSKQP. 2 positions are modified to phosphoserine: S41 and S51. Residues 114–125 show a composition bias toward basic and acidic residues; sequence LASKQKNEESKK. In terms of domain architecture, Protein kinase spans 133–383; that stretch reads FEIGRPLGKG…LREVLEHPWI (251 aa). ATP-binding positions include K143, K162, and 211–213; that span reads EYA. D256 (proton acceptor) is an active-site residue. Residue K258 forms a Glycyl lysine isopeptide (Lys-Gly) (interchain with G-Cter in SUMO2) linkage. Residues 260 to 261 and D274 each bind ATP; that span reads EN. An activation segment region spans residues 280–293; that stretch reads HAPSSRRTTLCGTL. Phosphothreonine occurs at positions 287 and 288. Phosphoserine; by PKA and PAK is present on S342.

It belongs to the protein kinase superfamily. Ser/Thr protein kinase family. Aurora subfamily. In terms of assembly, part of a complex composed of NEDD9, AURKA and CTTN; within the complex NEDD9 acts as a scaffold protein and is required for complex formation. Identified in a complex with AUNIP and NIN. Interacts with FBXL7. Interacts with CPEB1, JTB, TACC1, TPX2, PPP2CA, as well as with the protein phosphatase type 1 (PP1) isoforms PPP1CA, PPP1CB and PPP1CC. Also interacts with its substrates ARHGEF2, BORA, KIF2A, PARD3, and p53/TP53. Interaction with BORA promotes phosphorylation of PLK1. Interacts with CIMAP3. Interacts with GADD45A, competing with its oligomerization. Interacts (via C-terminus) with AUNIP (via C-terminus). Interacts with FRY; this interaction facilitates AURKA-mediated PLK1 phosphorylation. Interacts with SIRT2. Interacts with MYCN; interaction is phospho-independent and triggers AURKA activation; AURKA competes with FBXW7 for binding to unphosphorylated MYCN but not for binding to phosphorylated MYCN. Interacts with HNRNPU. Interacts with AAAS. Interacts with KLHL18 and CUL3. Interacts with FOXP1. Interacts with HDAC6; AURKA-mediated phosphorylation of HDAC6 promotes deacetylation of alpha-tubulin. Post-translationally, activated by phosphorylation at Thr-288; this brings about a change in the conformation of the activation segment. Phosphorylation at Thr-288 varies during the cell cycle and is highest during M phase. Autophosphorylated at Thr-288 upon TPX2 binding. Thr-288 can be phosphorylated by several kinases, including PAK and PKA. Protein phosphatase type 1 (PP1) binds AURKA and inhibits its activity by dephosphorylating Thr-288 during mitosis. Phosphorylation at Ser-342 decreases the kinase activity. PPP2CA controls degradation by dephosphorylating Ser-51 at the end of mitosis. In terms of processing, ubiquitinated by the E3 ubiquitin-protein ligase complex SCF(FBXL7) during mitosis, leading to its degradation by the proteasome. Ubiquitinated by CHFR, leading to its degradation by the proteasome. Ubiquitinated by the anaphase-promoting complex (APC), leading to its degradation by the proteasome. Ubiquitinated by the CUL3-KLHL18 ligase leading to its activation at the centrosome which is required for initiating mitotic entry. Ubiquitination mediated by CUL3-KLHL18 ligase does not lead to its degradation by the proteasome. In terms of tissue distribution, highly expressed in testis and weakly in skeletal muscle, thymus and spleen. Also highly expressed in colon, ovarian, prostate, neuroblastoma, breast and cervical cancer cell lines.

It localises to the cytoplasm. The protein localises to the cytoskeleton. Its subcellular location is the microtubule organizing center. It is found in the centrosome. The protein resides in the spindle pole. It localises to the centriole. The protein localises to the cell projection. Its subcellular location is the neuron projection. It is found in the cilium. The protein resides in the cilium basal body. It localises to the basolateral cell membrane. It catalyses the reaction L-seryl-[protein] + ATP = O-phospho-L-seryl-[protein] + ADP + H(+). The catalysed reaction is L-threonyl-[protein] + ATP = O-phospho-L-threonyl-[protein] + ADP + H(+). Its activity is regulated as follows. Activation of CDK1, appears to be an upstream event of AURKA activation. Phosphatase inhibitor-2 (PPP1R2) and TPX2 act also as activators. Inactivated by the G2 checkpoint. Inhibited by GADD45A and p53/TP53, and through dephosphorylation by protein phosphatase type 1 (PP1). MLN8054 is also a potent and selective inhibitor. Activated during the early phase of cilia disassembly in the presence of CIMAP3. Inhibited by the small molecule inhibitor VX-680. Mitotic serine/threonine kinase that contributes to the regulation of cell cycle progression. Associates with the centrosome and the spindle microtubules during mitosis and plays a critical role in various mitotic events including the establishment of mitotic spindle, centrosome duplication, centrosome separation as well as maturation, chromosomal alignment, spindle assembly checkpoint, and cytokinesis. Required for normal spindle positioning during mitosis and for the localization of NUMA1 and DCTN1 to the cell cortex during metaphase. Required for initial activation of CDK1 at centrosomes. Phosphorylates numerous target proteins, including ARHGEF2, BORA, BRCA1, CDC25B, DLGP5, HDAC6, KIF2A, LATS2, NDEL1, PARD3, PPP1R2, PLK1, RASSF1, TACC3, p53/TP53 and TPX2. Phosphorylates MCRS1 which is required for MCRS1-mediated kinetochore fiber assembly and mitotic progression. Regulates KIF2A tubulin depolymerase activity. Important for microtubule formation and/or stabilization. Required for normal axon formation. Plays a role in microtubule remodeling during neurite extension. Also acts as a key regulatory component of the p53/TP53 pathway, and particularly the checkpoint-response pathways critical for oncogenic transformation of cells, by phosphorylating and destabilizing p53/TP53. Phosphorylates its own inhibitors, the protein phosphatase type 1 (PP1) isoforms, to inhibit their activity. Inhibits cilia outgrowth. Required for cilia disassembly via phosphorylation of HDAC6 and subsequent deacetylation of alpha-tubulin. Regulates protein levels of the anti-apoptosis protein BIRC5 by suppressing the expression of the SCF(FBXL7) E3 ubiquitin-protein ligase substrate adapter FBXL7 through the phosphorylation of the transcription factor FOXP1. The chain is Aurora kinase A from Homo sapiens (Human).